The following is a 605-amino-acid chain: Endonuclease 8-like 3 (605 aa).

V2 serves as the catalytic Schiff-base intermediate with DNA; via amino nitrogen. The DNA site is built by N192 and R271. The FPG-type zinc-finger motif lies at K247–K281. A RanBP2-type zinc finger spans residues S317–I346. S450 carries the post-translational modification Phosphoserine. A disordered region spans residues E456–L477. Residues C507, H510, C533, C541, C554, H556, C579, and C587 each contribute to the Zn(2+) site. GRF-type zinc fingers lie at residues C507 to S550 and C554 to G596.

Belongs to the FPG family. In terms of tissue distribution, expressed in keratinocytes and embryonic fibroblasts (at protein level). Also detected in thymus, testis and fetal lung primary fibroblasts.

The protein resides in the nucleus. Its subcellular location is the chromosome. The catalysed reaction is 2'-deoxyribonucleotide-(2'-deoxyribose 5'-phosphate)-2'-deoxyribonucleotide-DNA = a 3'-end 2'-deoxyribonucleotide-(2,3-dehydro-2,3-deoxyribose 5'-phosphate)-DNA + a 5'-end 5'-phospho-2'-deoxyribonucleoside-DNA + H(+). Functionally, DNA glycosylase which prefers single-stranded DNA (ssDNA), or partially ssDNA structures such as bubble and fork structures, to double-stranded DNA (dsDNA). Mediates interstrand cross-link repair in response to replication stress: acts by mediating DNA glycosylase activity, cleaving one of the two N-glycosyl bonds comprising the interstrand cross-link, which avoids the formation of a double-strand break but generates an abasic site that is bypassed by translesion synthesis polymerases. In vitro, displays strong glycosylase activity towards the hydantoin lesions spiroiminodihydantoin (Sp) and guanidinohydantoin (Gh) in both ssDNA and dsDNA; also recognizes FapyA, FapyG, 5-OHU, 5-OHC, 5-OHMH, Tg and 8-oxoA lesions in ssDNA. No activity on 8-oxoG detected. Also shows weak DNA-(apurinic or apyrimidinic site) lyase activity. In vivo, appears to be the primary enzyme involved in removing Sp and Gh from ssDNA in neonatal tissues. The polypeptide is Endonuclease 8-like 3 (NEIL3) (Homo sapiens (Human)).